Reading from the N-terminus, the 275-residue chain is 2,3,4,5-tetrahydropyridine-2,6-dicarboxylate N-succinyltransferase (275 aa).

Substrate contacts are provided by R105 and D142.

Belongs to the transferase hexapeptide repeat family. As to quaternary structure, homotrimer.

Its subcellular location is the cytoplasm. It catalyses the reaction (S)-2,3,4,5-tetrahydrodipicolinate + succinyl-CoA + H2O = (S)-2-succinylamino-6-oxoheptanedioate + CoA. Its pathway is amino-acid biosynthesis; L-lysine biosynthesis via DAP pathway; LL-2,6-diaminopimelate from (S)-tetrahydrodipicolinate (succinylase route): step 1/3. In Pectobacterium atrosepticum (strain SCRI 1043 / ATCC BAA-672) (Erwinia carotovora subsp. atroseptica), this protein is 2,3,4,5-tetrahydropyridine-2,6-dicarboxylate N-succinyltransferase.